Consider the following 393-residue polypeptide: tRNA(Met) cytidine acetate ligase (393 aa).

Positions 81, 142, and 167 each coordinate ATP.

This sequence belongs to the TmcAL family.

It localises to the cytoplasm. The catalysed reaction is cytidine(34) in elongator tRNA(Met) + acetate + ATP = N(4)-acetylcytidine(34) in elongator tRNA(Met) + AMP + diphosphate. Catalyzes the formation of N(4)-acetylcytidine (ac(4)C) at the wobble position of elongator tRNA(Met), using acetate and ATP as substrates. First activates an acetate ion to form acetyladenylate (Ac-AMP) and then transfers the acetyl group to tRNA to form ac(4)C34. The sequence is that of tRNA(Met) cytidine acetate ligase from Bacillus thuringiensis (strain Al Hakam).